The sequence spans 70 residues: Guanine nucleotide-binding protein G(I)/G(S)/G(O) subunit gamma-8 (70 aa).

A Cysteine methyl ester modification is found at Cys-67. Cys-67 carries S-geranylgeranyl cysteine lipidation. Positions 68 to 70 (TLL) are cleaved as a propeptide — removed in mature form.

It belongs to the G protein gamma family. In terms of assembly, g proteins are composed of 3 units, alpha, beta and gamma. As to expression, detected in the olfactory epithelium, the vomeronasal epithelium and, to a lesser extent, the olfactory bulb.

Its subcellular location is the cell membrane. Its function is as follows. Guanine nucleotide-binding proteins (G proteins) are involved as a modulator or transducer in various transmembrane signaling systems. The beta and gamma chains are required for the GTPase activity, for replacement of GDP by GTP, and for G protein-effector interaction. This subunit may have a very specific role in the development and turnover of olfactory and vomeronasal neurons. In Rattus norvegicus (Rat), this protein is Guanine nucleotide-binding protein G(I)/G(S)/G(O) subunit gamma-8 (Gng8).